Reading from the N-terminus, the 87-residue chain is Large ribosomal subunit protein uL23c (87 aa).

The protein belongs to the universal ribosomal protein uL23 family. Part of the 50S ribosomal subunit.

The protein localises to the plastid. The protein resides in the chloroplast. In terms of biological role, binds to 23S rRNA. This is Large ribosomal subunit protein uL23c (rpl23) from Bigelowiella natans (Pedinomonas minutissima).